The primary structure comprises 150 residues: Cytochrome c oxidase subunit 5A, mitochondrial (150 aa).

The N-terminal 41 residues, M1–Y41, are a transit peptide targeting the mitochondrion. The SIFI-degron signature appears at L2–A17. K87 and K113 each carry N6-acetyllysine. At T141 the chain carries Phosphothreonine.

Belongs to the cytochrome c oxidase subunit 5A family. In terms of assembly, component of the cytochrome c oxidase (complex IV, CIV), a multisubunit enzyme composed of 14 subunits. The complex is composed of a catalytic core of 3 subunits MT-CO1, MT-CO2 and MT-CO3, encoded in the mitochondrial DNA, and 11 supernumerary subunits COX4I, COX5A, COX5B, COX6A, COX6B, COX6C, COX7A, COX7B, COX7C, COX8 and NDUFA4, which are encoded in the nuclear genome. The complex exists as a monomer or a dimer and forms supercomplexes (SCs) in the inner mitochondrial membrane with NADH-ubiquinone oxidoreductase (complex I, CI) and ubiquinol-cytochrome c oxidoreductase (cytochrome b-c1 complex, complex III, CIII), resulting in different assemblies (supercomplex SCI(1)III(2)IV(1) and megacomplex MCI(2)III(2)IV(2)). Interacts with AFG1L. Interacts with RAB5IF. In response to mitochondrial stress, the precursor protein is ubiquitinated by the SIFI complex in the cytoplasm before mitochondrial import, leading to its degradation. Within the SIFI complex, UBR4 initiates ubiquitin chain that are further elongated or branched by KCMF1.

Its subcellular location is the mitochondrion inner membrane. It participates in energy metabolism; oxidative phosphorylation. Its function is as follows. Component of the cytochrome c oxidase, the last enzyme in the mitochondrial electron transport chain which drives oxidative phosphorylation. The respiratory chain contains 3 multisubunit complexes succinate dehydrogenase (complex II, CII), ubiquinol-cytochrome c oxidoreductase (cytochrome b-c1 complex, complex III, CIII) and cytochrome c oxidase (complex IV, CIV), that cooperate to transfer electrons derived from NADH and succinate to molecular oxygen, creating an electrochemical gradient over the inner membrane that drives transmembrane transport and the ATP synthase. Cytochrome c oxidase is the component of the respiratory chain that catalyzes the reduction of oxygen to water. Electrons originating from reduced cytochrome c in the intermembrane space (IMS) are transferred via the dinuclear copper A center (CU(A)) of subunit 2 and heme A of subunit 1 to the active site in subunit 1, a binuclear center (BNC) formed by heme A3 and copper B (CU(B)). The BNC reduces molecular oxygen to 2 water molecules using 4 electrons from cytochrome c in the IMS and 4 protons from the mitochondrial matrix. This is Cytochrome c oxidase subunit 5A, mitochondrial (COX5A) from Pan troglodytes (Chimpanzee).